Reading from the N-terminus, the 973-residue chain is Valine--tRNA ligase (973 aa).

Residues 57–67 (PNVTGSLHMGH) carry the 'HIGH' region motif. Residues 569–573 (KMSKS) carry the 'KMSKS' region motif. K572 is a binding site for ATP. A coiled-coil region spans residues 901 to 970 (MAGLIDKEAE…AKILEQKIQI (70 aa)).

Belongs to the class-I aminoacyl-tRNA synthetase family. ValS type 1 subfamily. Monomer.

Its subcellular location is the cytoplasm. The enzyme catalyses tRNA(Val) + L-valine + ATP = L-valyl-tRNA(Val) + AMP + diphosphate. Functionally, catalyzes the attachment of valine to tRNA(Val). As ValRS can inadvertently accommodate and process structurally similar amino acids such as threonine, to avoid such errors, it has a 'posttransfer' editing activity that hydrolyzes mischarged Thr-tRNA(Val) in a tRNA-dependent manner. This is Valine--tRNA ligase from Colwellia psychrerythraea (strain 34H / ATCC BAA-681) (Vibrio psychroerythus).